A 491-amino-acid chain; its full sequence is NADPH:adrenodoxin oxidoreductase, mitochondrial (491 aa).

The N-terminal 32 residues, 1–32 (MASRCWRWWGWSAWPRTRLPPAGSTPSFCHHF), are a transit peptide targeting the mitochondrion. 4 residues coordinate FAD: Ala-49, Glu-69, Leu-77, and Val-113. NADP(+) is bound by residues 184–187 (QGNV), 228–229 (RR), and Glu-240. Residues Ser-310 and Ser-317 each carry the phosphoserine modification. FAD-binding positions include Trp-398 and 405–407 (GVI). Residue Gly-405 participates in NADP(+) binding.

The protein belongs to the ferredoxin--NADP reductase type 1 family. As to quaternary structure, monomer. Interacts directly with FDX1. FAD serves as cofactor.

The protein resides in the mitochondrion. Its subcellular location is the mitochondrion inner membrane. It carries out the reaction 2 reduced [adrenodoxin] + NADP(+) + H(+) = 2 oxidized [adrenodoxin] + NADPH. The catalysed reaction is 2 reduced [2Fe-2S]-[ferredoxin] + NADP(+) + H(+) = 2 oxidized [2Fe-2S]-[ferredoxin] + NADPH. It participates in steroid metabolism; cholesterol metabolism. In terms of biological role, serves as the first electron transfer protein in all the mitochondrial P450 systems including cholesterol side chain cleavage in all steroidogenic tissues, steroid 11-beta hydroxylation in the adrenal cortex, 25-OH-vitamin D3-24 hydroxylation in the kidney, and sterol C-27 hydroxylation in the liver. Also acts as a ferredoxin--NADP(+) reductase essential for coenzyme Q biosynthesis: together with FDX2, transfers the electrons required for the hydroxylation reaction performed by COQ6. The protein is NADPH:adrenodoxin oxidoreductase, mitochondrial of Homo sapiens (Human).